A 425-amino-acid chain; its full sequence is D-arabinitol transporter (425 aa).

The Cytoplasmic portion of the chain corresponds to 1–7 (MSINNKQ). Residues 8–28 (WLGLPLNLLWGYIAIAVFMTG) form a helical membrane-spanning segment. Topologically, residues 29–51 (DGFELAFLSHYIKALGFSPAEAS) are extracellular. A helical transmembrane segment spans residues 52–72 (FAFTLYGLAAALSAWISGVVA). The Cytoplasmic segment spans residues 73–80 (EIITPLKT). The helical transmembrane segment at 81–101 (MMIGFVLWCVFHVLFLVFGLG) threads the bilayer. Over 102–107 (HANYAL) the chain is Extracellular. Residues 108 to 128 (ILLFYGIRGFAYPLFLYSFIV) form a helical membrane-spanning segment. The Cytoplasmic portion of the chain corresponds to 129–141 (AIVHNVKSDNASS). Residues 142-162 (AIGWFWAVYSIGIGVFGSYIP) traverse the membrane as a helical segment. The Extracellular segment spans residues 163-172 (SFTIPHIGEM). The chain crosses the membrane as a helical span at residues 173 to 193 (GTLWLALAFCLTGGVIALVSL). Topologically, residues 194–237 (RHIQTPQHMQNLTTREKFSELGRAATLLYTNRNILLSSMVRIIN) are cytoplasmic. A helical transmembrane segment spans residues 238–258 (TLSLFGFAVIMPMMFVDELGF). The Extracellular portion of the chain corresponds to 259–263 (STSEW). A helical membrane pass occupies residues 264–284 (LQVWAVFFFTTIFSNVLWGIL). The Cytoplasmic portion of the chain corresponds to 285–295 (GEKLGWMKVVR). A helical membrane pass occupies residues 296–316 (WFGCIGMALSSLAFYYIPQHF). Residues 317-323 (GHSFAMA) are Extracellular-facing. Residues 324–344 (LIPAIALGIFVAAFVPLAAVF) traverse the membrane as a helical segment. The Cytoplasmic portion of the chain corresponds to 345-360 (PALEPKHKGAAISVYN). Residues 361 to 381 (LSAGMSNFLAPAIAVVLLPFF) form a helical membrane-spanning segment. Topologically, residues 382 to 383 (ST) are extracellular. Residues 384-404 (IGVVIAYTALYVVAFFLCAFI) traverse the membrane as a helical segment. Topologically, residues 405 to 425 (RVEQPGFSHKEATAREQVEFS) are cytoplasmic.

The protein belongs to the major facilitator superfamily. Sugar transporter (TC 2.A.1.1) family. CsbX subfamily.

It is found in the cell membrane. This chain is D-arabinitol transporter (dalT), found in Klebsiella pneumoniae.